The chain runs to 356 residues: Holliday junction branch migration complex subunit RuvB (356 aa).

A large ATPase domain (RuvB-L) region spans residues 13–197 (LPPARRMLSA…FGIVARLEFY (185 aa)). Residues Leu-36, Arg-37, Gly-78, Lys-81, Thr-82, Thr-83, 144 to 146 (EDY), Arg-187, Tyr-197, and Arg-234 contribute to the ATP site. Position 82 (Thr-82) interacts with Mg(2+). Residues 198–268 (TPEELARIVK…IANRALAMLD (71 aa)) form a small ATPAse domain (RuvB-S) region. Positions 271-356 (PQGFDLMDRK…RGNAENLFEE (86 aa)) are head domain (RuvB-H). Positions 326 and 331 each coordinate DNA.

This sequence belongs to the RuvB family. Homohexamer. Forms an RuvA(8)-RuvB(12)-Holliday junction (HJ) complex. HJ DNA is sandwiched between 2 RuvA tetramers; dsDNA enters through RuvA and exits via RuvB. An RuvB hexamer assembles on each DNA strand where it exits the tetramer. Each RuvB hexamer is contacted by two RuvA subunits (via domain III) on 2 adjacent RuvB subunits; this complex drives branch migration. In the full resolvosome a probable DNA-RuvA(4)-RuvB(12)-RuvC(2) complex forms which resolves the HJ.

Its subcellular location is the cytoplasm. The catalysed reaction is ATP + H2O = ADP + phosphate + H(+). The RuvA-RuvB-RuvC complex processes Holliday junction (HJ) DNA during genetic recombination and DNA repair, while the RuvA-RuvB complex plays an important role in the rescue of blocked DNA replication forks via replication fork reversal (RFR). RuvA specifically binds to HJ cruciform DNA, conferring on it an open structure. The RuvB hexamer acts as an ATP-dependent pump, pulling dsDNA into and through the RuvAB complex. RuvB forms 2 homohexamers on either side of HJ DNA bound by 1 or 2 RuvA tetramers; 4 subunits per hexamer contact DNA at a time. Coordinated motions by a converter formed by DNA-disengaged RuvB subunits stimulates ATP hydrolysis and nucleotide exchange. Immobilization of the converter enables RuvB to convert the ATP-contained energy into a lever motion, pulling 2 nucleotides of DNA out of the RuvA tetramer per ATP hydrolyzed, thus driving DNA branch migration. The RuvB motors rotate together with the DNA substrate, which together with the progressing nucleotide cycle form the mechanistic basis for DNA recombination by continuous HJ branch migration. Branch migration allows RuvC to scan DNA until it finds its consensus sequence, where it cleaves and resolves cruciform DNA. This chain is Holliday junction branch migration complex subunit RuvB, found in Polaromonas naphthalenivorans (strain CJ2).